The sequence spans 456 residues: Zinc finger C2HC domain-containing protein 1C (456 aa).

Disordered stretches follow at residues 16 to 46 (MLPH…QSLK) and 85 to 113 (YPHC…SSGP). 2 stretches are compositionally biased toward polar residues: residues 35–46 (YEQGDSSQQSLK) and 90–102 (GISQ…DSQG). A coiled-coil region spans residues 211–265 (VQIRRLEAAGESLEEEIRRKQILLRGKLKKTEEELRRIQTQKEQAKENENGELQK). Residues 336–388 (NKIRDPVSEPSVEKFSPPSETPVGALQGSARNSSLSMAPDSSGSSGSIEEPQL) form a disordered region. Low complexity predominate over residues 368–382 (SSLSMAPDSSGSSGS). The segment at 387–416 (QLGECSHCGRKFLSFRLERHSNICSRMRGS) adopts a C2HC/C3H-type zinc-finger fold. 4 residues coordinate Zn(2+): Cys-391, Cys-394, His-406, and Cys-410.

This sequence belongs to the ZC2HC1 family. Zn(2+) serves as cofactor.

The sequence is that of Zinc finger C2HC domain-containing protein 1C (ZC2HC1C) from Homo sapiens (Human).